The chain runs to 294 residues: MSKRPLRWLTEQITLAGMRPPISPQLLINRPAMQPVDLTGKRILLTGASSGIGAAATKQFGLHRAVVVAVARRKDLLDAVADRITGDGGTAMSLPCDLSDMEAIDALVEDVEKRIGGIDILINNAGRSIRRPLAESLERWHDVERTMVLNYYAPLRLIRGLAPGMLERGDGHIINVATWGVLSEASPLFSVYNASKAALSAVSRIIETEWGSQGVHSTTLYYPLVATPMIAPTKAYDGLPALTAAEAAEWMVTAARTRPVRIAPRVAVAVNALDSIGPRWVNALMQRRNEQLNP.

NADP(+) is bound by residues S49, S50, I52, R72, D97, L98, N124, Y192, K196, V225, and T227. Y192 serves as the catalytic Proton acceptor.

Belongs to the short-chain dehydrogenases/reductases (SDR) family.

The protein localises to the host mitochondrion. It catalyses the reaction hexadecanal + NADP(+) + CoA = hexadecanoyl-CoA + NADPH + H(+). In terms of biological role, oxidoreductase that promotes the persistence of M.tuberculosis in host macrophages by reprogramming the fatty acid metabolism in host mitochondria. When localized in the host mitochondria, it potentially acts on unknown lipid substrates and converts them into products that directly or indirectly alter the lipid profile of the mitochondria. This change in lipid profile results in increased mitochondrial membrane fluidity, enhanced endogenous fatty acid oxidation and increased mitochondrial spare respiratory capacity. All these events eventually favor M.tuberculosis persistence in the host macrophages. In vitro, can catalyze the NADPH-dependent reduction of palmitoyl-CoA (hexadecanoyl-CoA). The sequence is that of Fatty acyl-CoA reductase Rv0547c from Mycobacterium tuberculosis (strain ATCC 25618 / H37Rv).